Here is a 124-residue protein sequence, read N- to C-terminus: Small ribosomal subunit protein uS13 (124 aa).

The segment at Gly95 to Arg124 is disordered. Positions Gln101–Arg124 are enriched in basic residues.

Belongs to the universal ribosomal protein uS13 family. Part of the 30S ribosomal subunit. Forms a loose heterodimer with protein S19. Forms two bridges to the 50S subunit in the 70S ribosome.

Located at the top of the head of the 30S subunit, it contacts several helices of the 16S rRNA. In the 70S ribosome it contacts the 23S rRNA (bridge B1a) and protein L5 of the 50S subunit (bridge B1b), connecting the 2 subunits; these bridges are implicated in subunit movement. Contacts the tRNAs in the A and P-sites. This chain is Small ribosomal subunit protein uS13, found in Coprothermobacter proteolyticus (strain ATCC 35245 / DSM 5265 / OCM 4 / BT).